Consider the following 488-residue polypeptide: Ammonium transporter Rh type C-like 2 (488 aa).

Residues 1-21 (MGNCFGSRGICDRPKNTNIRL) are Cytoplasmic-facing. A helical transmembrane segment spans residues 22-42 (SLPAVCFVWQVSMIILFGVFV). Residues 43 to 73 (RYNEEADTNWVYTKKEKNITSDIENDFYFRY) lie on the Extracellular side of the membrane. N-linked (GlcNAc...) asparagine glycosylation is present at Asn60. A helical transmembrane segment spans residues 74–94 (PSFQDVHVMIFVGFGFLMTFL). Residues 95–98 (KRYS) are Cytoplasmic-facing. Residues 99–119 (FGAVGFNFLIAAFGLQWALLM) traverse the membrane as a helical segment. Over 120–139 (QGWFSPLGDDGKIKIGIENL) the chain is Extracellular. A helical membrane pass occupies residues 140-160 (INADFCVASCLIAYGAVLGKV). Topologically, residues 161–162 (SP) are cytoplasmic. The helical transmembrane segment at 163-183 (VQLLVMTLFGITLYAVEEFII) threads the bilayer. At 184-191 (LRVLNAKD) the chain is on the extracellular side. A helical transmembrane segment spans residues 192 to 214 (AGGSMVIHTFGAYYGLSISRVLY). The Cytoplasmic segment spans residues 215 to 232 (RPNLNKSKHMNGSVYHSD). A helical transmembrane segment spans residues 233–253 (VFAMIGTLFLWMFWPSFNSAI). The Extracellular segment spans residues 254 to 264 (CNHGDGQHRAA). The chain crosses the membrane as a helical span at residues 265-285 (INTYLALASTVLTTVAISSMF). Residues 286–298 (EKTGKLDMVHIQN) lie on the Cytoplasmic side of the membrane. The helical transmembrane segment at 299 to 319 (STLAGGVAVGTAAEFMLMPYG) threads the bilayer. Position 320 (Ser320) is a topological domain, extracellular. A helical membrane pass occupies residues 321–341 (LIVGFFCGIISTLGYIYLTPF). At 342–356 (LEERLKIQDTCGIHN) the chain is on the cytoplasmic side. A helical transmembrane segment spans residues 357-377 (LHAMPGVIGGIVGAISAAAAS). At 378 to 409 (KEVYGDLGLKNIFSIEGSNVTRLPTVQGGYQA) the chain is on the extracellular side. Residues 410-430 (AALCVALCFGIGGGTFVGLVL) traverse the membrane as a helical segment. Over 431–488 (KLPIWGDPADEHCFNDEMYWEVPEDEESIIPPVLSYNNHMIPNNKHEEMRETNFAEQS) the chain is Cytoplasmic.

The protein belongs to the ammonium transporter (TC 2.A.49) family. Rh subfamily. Homotrimer. As to expression, at larval stages, expressed only in the yolk sac and gill. However, the kidney and the gills are major sites of expression in adults.

The protein localises to the apical cell membrane. Its function is as follows. Functions as an ammonia transporter. May play a role in the elimination of ammonia in the gill. The sequence is that of Ammonium transporter Rh type C-like 2 (rhcgl2) from Danio rerio (Zebrafish).